Here is a 483-residue protein sequence, read N- to C-terminus: NADH-quinone oxidoreductase subunit N (483 aa).

The next 13 helical transmembrane spans lie at 13 to 33, 45 to 65, 80 to 100, 111 to 131, 165 to 185, 205 to 225, 244 to 264, 276 to 296, 301 to 321, 328 to 348, 373 to 393, 407 to 429, and 452 to 472; these read PALP…YGVF, GALA…NAYV, FMKL…LTFI, PVLI…NGLI, FVLG…IYGF, IGVI…ISAV, AFFA…VLFV, IIVF…IGQS, LMAY…AAGT, VLIY…CILA, AFMM…AGFF, LYPL…LRIV, and VLGI…PLIL.

This sequence belongs to the complex I subunit 2 family. As to quaternary structure, NDH-1 is composed of 14 different subunits. Subunits NuoA, H, J, K, L, M, N constitute the membrane sector of the complex.

It localises to the cell inner membrane. It catalyses the reaction a quinone + NADH + 5 H(+)(in) = a quinol + NAD(+) + 4 H(+)(out). NDH-1 shuttles electrons from NADH, via FMN and iron-sulfur (Fe-S) centers, to quinones in the respiratory chain. The immediate electron acceptor for the enzyme in this species is believed to be ubiquinone. Couples the redox reaction to proton translocation (for every two electrons transferred, four hydrogen ions are translocated across the cytoplasmic membrane), and thus conserves the redox energy in a proton gradient. This Parvibaculum lavamentivorans (strain DS-1 / DSM 13023 / NCIMB 13966) protein is NADH-quinone oxidoreductase subunit N.